Reading from the N-terminus, the 450-residue chain is Ornithine decarboxylase (450 aa).

Position 59 is an N6-(pyridoxal phosphate)lysine (lysine 59). Pyridoxal 5'-phosphate-binding positions include serine 190, glycine 227, and 264 to 267; that span reads EPGR. At serine 293 the chain carries Phosphoserine; by CK2. 321 to 322 is a binding site for substrate; sequence YD. Cysteine 350 functions as the Proton donor; shared with dimeric partner in the catalytic mechanism. Aspartate 351 contacts substrate. Residue tyrosine 379 coordinates pyridoxal 5'-phosphate.

It belongs to the Orn/Lys/Arg decarboxylase class-II family. As to quaternary structure, homodimer. Only the dimer is catalytically active, as the active sites are constructed of residues from both monomers. Pyridoxal 5'-phosphate serves as cofactor.

The catalysed reaction is L-ornithine + H(+) = putrescine + CO2. Its pathway is amine and polyamine biosynthesis; putrescine biosynthesis via L-ornithine pathway; putrescine from L-ornithine: step 1/1. Its activity is regulated as follows. Inhibited by antizymes (AZs) in response to polyamine levels. AZs inhibit the assembly of the functional homodimer by binding to ODC monomers and targeting them for ubiquitin-independent proteolytic destruction by the 26S proteasome. Catalyzes the first and rate-limiting step of polyamine biosynthesis that converts ornithine into putrescine, which is the precursor for the polyamines, spermidine and spermine. Polyamines are essential for cell proliferation and are implicated in cellular processes, ranging from DNA replication to apoptosis. In Gallus gallus (Chicken), this protein is Ornithine decarboxylase (ODC1).